Here is a 261-residue protein sequence, read N- to C-terminus: Carnitinyl-CoA dehydratase (261 aa).

Catalysis depends on Glu111, which acts as the Nucleophile. Catalysis depends on Glu131, which acts as the Proton acceptor.

It belongs to the enoyl-CoA hydratase/isomerase family.

The enzyme catalyses (R)-carnitinyl-CoA = crotonobetainyl-CoA + H2O. Its pathway is amine and polyamine metabolism; carnitine metabolism. Functionally, catalyzes the reversible dehydration of L-carnitinyl-CoA to crotonobetainyl-CoA. The sequence is that of Carnitinyl-CoA dehydratase from Salmonella enteritidis PT4 (strain P125109).